The chain runs to 476 residues: FAD-dependent monooxygenase ausM (476 aa).

FAD-binding residues include Glu-41, Gly-55, and Arg-114. Tyr-222 is an active-site residue. Asp-314 and Ala-327 together coordinate FAD. A helical transmembrane segment spans residues 447 to 467 (LGSTPIHMLTLLLPCLFYFMY).

This sequence belongs to the paxM FAD-dependent monooxygenase family. FAD serves as cofactor.

The protein resides in the membrane. It functions in the pathway secondary metabolite biosynthesis; terpenoid biosynthesis. FAD-dependent monooxygenase; part of the gene cluster A that mediates the biosynthesis of the fungal meroterpenoid acetoxydehydroaustin. The first step of the pathway is the synthesis of 3,5-dimethylorsellinic acid by the polyketide synthase ausA. 3,5-dimethylorsellinic acid is then prenylated by the polyprenyl transferase ausN. Further epoxidation by the FAD-dependent monooxygenase ausM and cyclization by the probable terpene cyclase ausL lead to the formation of protoaustinoid A. Protoaustinoid A is then oxidized to spiro-lactone preaustinoid A3 by the combined action of the FAD-binding monooxygenases ausB and ausC, and the dioxygenase ausE. Acid-catalyzed keto-rearrangement and ring contraction of the tetraketide portion of preaustinoid A3 by ausJ lead to the formation of preaustinoid A4. The aldo-keto reductase ausK, with the help of ausH, is involved in the next step by transforming preaustinoid A4 into isoaustinone which is in turn hydroxylated by the P450 monooxygenase ausI to form austinolide. The cytochrome P450 monooxygenase ausG then modifies austinolide to austinol. Austinol is further acetylated to austin by the O-acetyltransferase ausP, which spontaneously changes to dehydroaustin. The cytochrome P450 monooxygenase then converts dehydroaustin is into 7-dehydrodehydroaustin. The hydroxylation catalyzed by ausR permits the second O-acetyltransferase ausQ to add an additional acetyl group to the molecule, leading to the formation of acetoxydehydroaustin. Due to genetic rearrangements of the clusters and the subsequent loss of some enzymes, the end product of the Penicillium brasilianum austinoid biosynthesis clusters is acetoxydehydroaustin. The chain is FAD-dependent monooxygenase ausM from Penicillium brasilianum.